We begin with the raw amino-acid sequence, 97 residues long: Nuclear protein 2 (97 aa).

Residues 76–97 (LLNGQRKRRQRQLHPKMRTRLT) are disordered. The span at 80 to 97 (QRKRRQRQLHPKMRTRLT) shows a compositional bias: basic residues.

Belongs to the NUPR family.

It is found in the nucleus. Acts as a transcriptional repressor by inhibiting gene expression at the NUPR1 promoter in a p53/TP53-dependent manner in cancer cells. Involved in the G1 cell cycle arrest, and in a decrease in cell viability and cell proliferation. Plays a role as a negative regulator of the protumoral factor NUPR1. This Homo sapiens (Human) protein is Nuclear protein 2.